Consider the following 512-residue polypeptide: Tyrosine decarboxylase (512 aa).

L-tyrosine contacts are provided by Pro100, His205, and His320. Position 321 is an N6-(pyridoxal phosphate)lysine (Lys321). Tyr350 provides a ligand contact to L-tyrosine.

It belongs to the group II decarboxylase family. In terms of assembly, homodimer. Pyridoxal 5'-phosphate serves as cofactor. As to expression, mainly expressed in roots, stems and capsule walls.

The enzyme catalyses L-tyrosine + H(+) = tyramine + CO2. Tyrosine decarboxylase that converts tyrosine into tyramine, a precursor of isoquinoline alkaloids and various amides. The polypeptide is Tyrosine decarboxylase (Papaver somniferum (Opium poppy)).